A 702-amino-acid chain; its full sequence is Translation factor GUF1 homolog, chloroplastic (702 aa).

The segment covering 1 to 30 (MASAAPASRGAARASTAARDAPFAAAARGP) has biased composition (low complexity). Residues 1–41 (MASAAPASRGAARASTAARDAPFAAAARGPGRFRRDGNGRN) are disordered. A tr-type G domain is found at 87–283 (SQIRNFSIIA…NIVKMIPPPP (197 aa)). GTP-binding positions include 96 to 103 (AHIDHGKS), 162 to 166 (DTPGH), and 216 to 219 (NKID).

The protein belongs to the TRAFAC class translation factor GTPase superfamily. Classic translation factor GTPase family. LepA subfamily.

It is found in the plastid. The protein localises to the chloroplast. The catalysed reaction is GTP + H2O = GDP + phosphate + H(+). In terms of biological role, promotes chloroplast protein synthesis. May act as a fidelity factor of the translation reaction, by catalyzing a one-codon backward translocation of tRNAs on improperly translocated ribosomes. The sequence is that of Translation factor GUF1 homolog, chloroplastic from Micromonas pusilla (strain CCMP1545) (Picoplanktonic green alga).